The primary structure comprises 543 residues: Aspartate/alanine antiporter (543 aa).

10 helical membrane-spanning segments follow: residues 4–26, 33–55, 88–110, 117–139, 159–178, 362–381, 385–407, 428–450, 455–477, and 520–542; these read IGNF…GYLL, SFTL…LGVF, FGAK…AYAC, GPGI…GSSL, IPIV…LIFL, IINY…LGIV, VSGV…VQSI, SIGL…ISAI, ISVL…VICY, and VAPA…IVLL.

It belongs to the AAE transporter (TC 2.A.81) family.

The protein resides in the cell membrane. In terms of biological role, catalyzes the electrogenic exchange of aspartate with alanine. This is Aspartate/alanine antiporter (aspT) from Tetragenococcus halophilus (Pediococcus halophilus).